The chain runs to 97 residues: Co-chaperonin GroES (97 aa).

This sequence belongs to the GroES chaperonin family. Heptamer of 7 subunits arranged in a ring. Interacts with the chaperonin GroEL.

It localises to the cytoplasm. Functionally, together with the chaperonin GroEL, plays an essential role in assisting protein folding. The GroEL-GroES system forms a nano-cage that allows encapsulation of the non-native substrate proteins and provides a physical environment optimized to promote and accelerate protein folding. GroES binds to the apical surface of the GroEL ring, thereby capping the opening of the GroEL channel. The chain is Co-chaperonin GroES from Yersinia pseudotuberculosis serotype O:1b (strain IP 31758).